The primary structure comprises 918 residues: Leucine--tRNA ligase (918 aa).

A 'HIGH' region motif is present at residues 40 to 51 (PYPSGVGLHVGH). Residues 692–696 (KMSKS) carry the 'KMSKS' region motif. An ATP-binding site is contributed by Lys695.

Belongs to the class-I aminoacyl-tRNA synthetase family.

The protein resides in the cytoplasm. The enzyme catalyses tRNA(Leu) + L-leucine + ATP = L-leucyl-tRNA(Leu) + AMP + diphosphate. The sequence is that of Leucine--tRNA ligase from Azobacteroides pseudotrichonymphae genomovar. CFP2.